Reading from the N-terminus, the 469-residue chain is Tubulin gamma-1 chain (469 aa).

Ala142–Gly148 contacts GTP.

Belongs to the tubulin family.

The protein localises to the cytoplasm. Its subcellular location is the cytoskeleton. It is found in the microtubule organizing center. Functionally, tubulin is the major constituent of microtubules. The gamma chain is found at microtubule organizing centers (MTOC) such as the spindle poles, suggesting that it is involved in the minus-end nucleation of microtubule assembly. The protein is Tubulin gamma-1 chain (TUBG1) of Zea mays (Maize).